The following is a 214-amino-acid chain: ATP-dependent Clp protease proteolytic subunit 2 (214 aa).

S110 functions as the Nucleophile in the catalytic mechanism. H135 is an active-site residue.

Belongs to the peptidase S14 family. As to quaternary structure, fourteen ClpP subunits assemble into 2 heptameric rings which stack back to back to give a disk-like structure with a central cavity, resembling the structure of eukaryotic proteasomes.

It is found in the cytoplasm. It carries out the reaction Hydrolysis of proteins to small peptides in the presence of ATP and magnesium. alpha-casein is the usual test substrate. In the absence of ATP, only oligopeptides shorter than five residues are hydrolyzed (such as succinyl-Leu-Tyr-|-NHMec, and Leu-Tyr-Leu-|-Tyr-Trp, in which cleavage of the -Tyr-|-Leu- and -Tyr-|-Trp bonds also occurs).. In terms of biological role, cleaves peptides in various proteins in a process that requires ATP hydrolysis. Has a chymotrypsin-like activity. Plays a major role in the degradation of misfolded proteins. The chain is ATP-dependent Clp protease proteolytic subunit 2 from Mycobacterium leprae (strain TN).